The sequence spans 508 residues: POTE ankyrin domain family member G (508 aa).

5 ANK repeats span residues 172–201 (QKRT…QLNI), 205–234 (KKRT…DPNI), 238–267 (YGNT…DIES), 271–300 (HGLT…NLNA), and 304–333 (YGRT…DVSS). Positions 367–376 (KVSSENSNPE) are enriched in polar residues. Positions 367–488 (KVSSENSNPE…QLSEEQNTGI (122 aa)) are disordered. 2 stretches are compositionally biased toward basic and acidic residues: residues 377-392 (QDLK…RLKG) and 406-421 (EINK…EMKK). The segment covering 476–488 (TQKQLSEEQNTGI) has biased composition (polar residues).

The protein belongs to the POTE family.

The polypeptide is POTE ankyrin domain family member G (POTEG) (Homo sapiens (Human)).